A 246-amino-acid polypeptide reads, in one-letter code: 1-(5-phosphoribosyl)-5-[(5-phosphoribosylamino)methylideneamino] imidazole-4-carboxamide isomerase (246 aa).

D8 functions as the Proton acceptor in the catalytic mechanism. The active-site Proton donor is D130.

Belongs to the HisA/HisF family.

The protein resides in the cytoplasm. The catalysed reaction is 1-(5-phospho-beta-D-ribosyl)-5-[(5-phospho-beta-D-ribosylamino)methylideneamino]imidazole-4-carboxamide = 5-[(5-phospho-1-deoxy-D-ribulos-1-ylimino)methylamino]-1-(5-phospho-beta-D-ribosyl)imidazole-4-carboxamide. The protein operates within amino-acid biosynthesis; L-histidine biosynthesis; L-histidine from 5-phospho-alpha-D-ribose 1-diphosphate: step 4/9. This is 1-(5-phosphoribosyl)-5-[(5-phosphoribosylamino)methylideneamino] imidazole-4-carboxamide isomerase from Halorhodospira halophila (strain DSM 244 / SL1) (Ectothiorhodospira halophila (strain DSM 244 / SL1)).